The following is a 204-amino-acid chain: Imidazole glycerol phosphate synthase subunit HisH (204 aa).

Positions 1-204 constitute a Glutamine amidotransferase type-1 domain; it reads MIKIVDYGLG…MTLLKNFSEI (204 aa). The Nucleophile role is filled by C80. Active-site residues include H186 and E188.

As to quaternary structure, heterodimer of HisH and HisF.

It is found in the cytoplasm. The catalysed reaction is 5-[(5-phospho-1-deoxy-D-ribulos-1-ylimino)methylamino]-1-(5-phospho-beta-D-ribosyl)imidazole-4-carboxamide + L-glutamine = D-erythro-1-(imidazol-4-yl)glycerol 3-phosphate + 5-amino-1-(5-phospho-beta-D-ribosyl)imidazole-4-carboxamide + L-glutamate + H(+). It carries out the reaction L-glutamine + H2O = L-glutamate + NH4(+). Its pathway is amino-acid biosynthesis; L-histidine biosynthesis; L-histidine from 5-phospho-alpha-D-ribose 1-diphosphate: step 5/9. In terms of biological role, IGPS catalyzes the conversion of PRFAR and glutamine to IGP, AICAR and glutamate. The HisH subunit catalyzes the hydrolysis of glutamine to glutamate and ammonia as part of the synthesis of IGP and AICAR. The resulting ammonia molecule is channeled to the active site of HisF. The chain is Imidazole glycerol phosphate synthase subunit HisH from Bdellovibrio bacteriovorus (strain ATCC 15356 / DSM 50701 / NCIMB 9529 / HD100).